We begin with the raw amino-acid sequence, 132 residues long: Small ribosomal subunit protein bS6 (132 aa).

Belongs to the bacterial ribosomal protein bS6 family.

In terms of biological role, binds together with bS18 to 16S ribosomal RNA. The sequence is that of Small ribosomal subunit protein bS6 from Chlorobium chlorochromatii (strain CaD3).